Here is a 327-residue protein sequence, read N- to C-terminus: MALVHKLLRDTYILRKFSKPTSALYPFLGIRFAEYSSSLQKPVASPGKASSQRKTEGDLQGDHQKEVALDITSSEEKPDVSFDKAIRDEAMYHFRHLKDEIVDHWRGPEGHSLHEVLLEQAKVVWQFRGKEDLDKWTVTSDKTIGGRSEVFLKMGKNNQSALLYGTLSSEAPQDGESTRSGYCAMKSRIPRGAFERKMSYDWSQFNTLYLRVRGDGRPWMVNIKEDTDFFQRTNQMYSYFMFTRGGPYWQEVKIPFSKFFFSNRGRIRDVQHELPLDKISSIGFTLADKVDGPFFLEIDFIGVFTDPAHTEEFAYENSPELNPRLFK.

The N-terminal 24 residues, 1 to 24 (MALVHKLLRDTYILRKFSKPTSAL), are a transit peptide targeting the mitochondrion. The segment at 42–63 (PVASPGKASSQRKTEGDLQGDH) is disordered. Positions 53 to 63 (RKTEGDLQGDH) are enriched in basic and acidic residues. The residue at position 318 (Ser318) is a Phosphoserine.

This sequence belongs to the CIA30 family. In terms of assembly, part of the mitochondrial complex I assembly/MCIA complex that comprises at least the core subunits TMEM126B, NDUFAF1, ECSIT and ACAD9 and complement subunits such as COA1 and TMEM186. Interacts with ECSIT. Interacts with ACAD9. At early stages of complex I assembly, it is found in intermediate subcomplexes that contain different subunits including NDUFB6, NDUFA6, NDUFA9, NDUFS3, NDUFS7, ND1, ND2 and ND3. Interacts with TMEM70 and TMEM242.

It is found in the mitochondrion. The protein localises to the mitochondrion matrix. In terms of biological role, as part of the MCIA complex, involved in the assembly of the mitochondrial complex I. The polypeptide is Complex I intermediate-associated protein 30, mitochondrial (Gorilla gorilla gorilla (Western lowland gorilla)).